The following is a 526-amino-acid chain: Cytochrome P450 monooxygenase SAT11 (526 aa).

The helical transmembrane segment at Ala-18–Ile-38 threads the bilayer. Asn-125 and Asn-447 each carry an N-linked (GlcNAc...) asparagine glycan. Cys-455 serves as a coordination point for heme. Asn-520 carries an N-linked (GlcNAc...) asparagine glycan.

Belongs to the cytochrome P450 family. Requires heme as cofactor.

It is found in the membrane. Its pathway is mycotoxin biosynthesis. Its function is as follows. Cytochrome P450 monooxygenase; part of the satratoxin SC2 cluster involved in the biosynthesis of satratoxins, trichothecene mycotoxins that are associated with human food poisonings. Satratoxins are suggested to be made by products of multiple gene clusters (SC1, SC2 and SC3) that encode 21 proteins in all, including polyketide synthases, acetyltransferases, and other enzymes expected to modify the trichothecene skeleton. SC1 encodes 10 proteins, SAT1 to SAT10. The largest are SAT8, which encodes a putative polyketide synthase (PKS) with a conventional non-reducing architecture, and SAT10, a putative protein containing four ankyrin repeats and thus may be involved in protein scaffolding. The putative short-chain reductase SAT3 may assist the PKS in some capacity. SAT6 contains a secretory lipase domain and acts probably as a trichothecene esterase. SAT5 encodes a putative acetyltransferase, and so, with SAT6, may affect endogenous protection from toxicity. The probable transcription factor SAT9 may regulate the expression of the SC1 cluster. SC2 encodes proteins SAT11 to SAT16, the largest of which encodes the putative reducing PKS SAT13. SAT11 is a cytochrome P450 monooxygenase, while SAT14 and SAT16 are probable acetyltransferases. The SC2 cluster may be regulated by the transcription factor SAT15. SC3 is a small cluster that encodes 5 proteins, SAT17 to SAT21. SAT21 is a putative MFS-type transporter which may have a role in exporting secondary metabolites. The four other proteins putatively encoded in SC3 include the taurine hydroxylase-like protein SAT17, the O-methyltransferase SAT18, the acetyltransferase SAT19, and the Cys6-type zinc finger SAT20, the latter being probably involved in regulation of SC3 expression. The chain is Cytochrome P450 monooxygenase SAT11 from Stachybotrys chartarum (strain CBS 109288 / IBT 7711) (Toxic black mold).